Consider the following 297-residue polypeptide: Formylmethanofuran--tetrahydromethanopterin formyltransferase (297 aa).

Belongs to the FTR family. Homotetramer.

It is found in the cytoplasm. It carries out the reaction N-formylmethanofuran + 5,6,7,8-tetrahydromethanopterin + H(+) = N(5)-formyl-5,6,7,8-tetrahydromethanopterin + methanofuran. The protein operates within metabolic intermediate metabolism; lactate oxidation. In terms of biological role, catalyzes the transfer of a formyl group from 5-formyl tetrahydromethanopterin (5-formyl-H(4)MPT) to methanofuran (MFR) to produce formylmethanofuran (formyl-MFR) and tetrahydromethanopterin (H(4)MPT). This chain is Formylmethanofuran--tetrahydromethanopterin formyltransferase, found in Archaeoglobus fulgidus (strain ATCC 49558 / DSM 4304 / JCM 9628 / NBRC 100126 / VC-16).